Here is a 502-residue protein sequence, read N- to C-terminus: Glutamate--tRNA ligase (502 aa).

The 'HIGH' region motif lies at 9–19; sequence PSPTGFPHVGT. The 'KMSKS' region motif lies at 250–254; the sequence is KLSKR. Position 253 (Lys-253) interacts with ATP.

It belongs to the class-I aminoacyl-tRNA synthetase family. Glutamate--tRNA ligase type 1 subfamily. In terms of assembly, monomer.

It is found in the cytoplasm. The enzyme catalyses tRNA(Glu) + L-glutamate + ATP = L-glutamyl-tRNA(Glu) + AMP + diphosphate. Its function is as follows. Catalyzes the attachment of glutamate to tRNA(Glu) in a two-step reaction: glutamate is first activated by ATP to form Glu-AMP and then transferred to the acceptor end of tRNA(Glu). This chain is Glutamate--tRNA ligase, found in Acinetobacter baumannii (strain SDF).